The primary structure comprises 558 residues: Deleted in azoospermia protein 2 (558 aa).

The span at Met-1–Asn-10 shows a compositional bias: polar residues. The interval Met-1–Ser-27 is disordered. Low complexity predominate over residues Ser-11–Ser-27. In terms of domain architecture, RRM spans Asn-40–Arg-115. 15 consecutive DAZ domains span residues Ala-167 to Gln-190, Glu-191 to Gln-214, Pro-215 to Gln-238, Ala-239 to Gln-262, Pro-263 to Gln-286, Ala-287 to Gln-310, Ala-311 to Gln-334, Ala-335 to Gln-358, Ala-359 to Gln-382, Ala-383 to Gln-406, Ala-407 to Gln-430, Ala-431 to Gln-454, Ala-455 to Gln-478, Ala-479 to Gln-502, and Ala-503 to Gln-526.

It belongs to the RRM DAZ family. Forms a heterodimer with BOLL and DAZL. Interacts with PUM2, DAZAP1, DAZAP2, DZIP1 and DZIP3. Testis specific.

Its subcellular location is the cytoplasm. It is found in the nucleus. Functionally, RNA-binding protein that plays an essential role in spermatogenesis. May act by binding to the 3'-UTR of mRNAs and regulating their translation. This is Deleted in azoospermia protein 2 (DAZ2) from Homo sapiens (Human).